The sequence spans 429 residues: Adenylosuccinate synthetase (429 aa).

GTP contacts are provided by residues 12 to 18 (GDEGKGK) and 40 to 42 (GHT). Asp-13 (proton acceptor) is an active-site residue. Residues Asp-13 and Gly-40 each coordinate Mg(2+). IMP contacts are provided by residues 13-16 (DEGK), 38-41 (NAGH), Thr-129, Arg-143, Gln-224, Thr-239, and Arg-303. Catalysis depends on His-41, which acts as the Proton donor. 299 to 305 (VTTGRAR) contributes to the substrate binding site. GTP-binding positions include Arg-305, 331–333 (KLD), and 413–415 (GVG).

Belongs to the adenylosuccinate synthetase family. Homodimer. Mg(2+) serves as cofactor.

The protein resides in the cytoplasm. The enzyme catalyses IMP + L-aspartate + GTP = N(6)-(1,2-dicarboxyethyl)-AMP + GDP + phosphate + 2 H(+). It participates in purine metabolism; AMP biosynthesis via de novo pathway; AMP from IMP: step 1/2. Plays an important role in the de novo pathway of purine nucleotide biosynthesis. Catalyzes the first committed step in the biosynthesis of AMP from IMP. The protein is Adenylosuccinate synthetase of Rhodococcus erythropolis (strain PR4 / NBRC 100887).